Reading from the N-terminus, the 274-residue chain is Nitrogenase iron protein (274 aa).

Residue 8–15 (GKGGIGKS) participates in ATP binding. Cysteine 94 serves as a coordination point for [4Fe-4S] cluster. Arginine 97 is subject to ADP-ribosylarginine; by dinitrogenase reductase ADP-ribosyltransferase. Position 131 (cysteine 131) interacts with [4Fe-4S] cluster.

It belongs to the NifH/BchL/ChlL family. Homodimer. [4Fe-4S] cluster serves as cofactor. The reversible ADP-ribosylation of Arg-97 inactivates the nitrogenase reductase and regulates nitrogenase activity.

The catalysed reaction is N2 + 8 reduced [2Fe-2S]-[ferredoxin] + 16 ATP + 16 H2O = H2 + 8 oxidized [2Fe-2S]-[ferredoxin] + 2 NH4(+) + 16 ADP + 16 phosphate + 6 H(+). The key enzymatic reactions in nitrogen fixation are catalyzed by the nitrogenase complex, which has 2 components: the iron protein and the molybdenum-iron protein. The chain is Nitrogenase iron protein from Chlorobium phaeobacteroides (strain DSM 266 / SMG 266 / 2430).